The following is a 372-amino-acid chain: Queuine tRNA-ribosyltransferase (372 aa).

The active-site Proton acceptor is Asp93. Substrate is bound by residues 93–97 (DSGGF), Asp147, Gln190, and Gly217. The segment at 248-254 (GVGSPDC) is RNA binding. Asp267 serves as the catalytic Nucleophile. The tract at residues 272-276 (TRMAR) is RNA binding; important for wobble base 34 recognition. Residues Cys305, Cys307, Cys310, and His336 each coordinate Zn(2+).

It belongs to the queuine tRNA-ribosyltransferase family. Homodimer. Within each dimer, one monomer is responsible for RNA recognition and catalysis, while the other monomer binds to the replacement base PreQ1. Zn(2+) is required as a cofactor.

It carries out the reaction 7-aminomethyl-7-carbaguanine + guanosine(34) in tRNA = 7-aminomethyl-7-carbaguanosine(34) in tRNA + guanine. Its pathway is tRNA modification; tRNA-queuosine biosynthesis. In terms of biological role, catalyzes the base-exchange of a guanine (G) residue with the queuine precursor 7-aminomethyl-7-deazaguanine (PreQ1) at position 34 (anticodon wobble position) in tRNAs with GU(N) anticodons (tRNA-Asp, -Asn, -His and -Tyr). Catalysis occurs through a double-displacement mechanism. The nucleophile active site attacks the C1' of nucleotide 34 to detach the guanine base from the RNA, forming a covalent enzyme-RNA intermediate. The proton acceptor active site deprotonates the incoming PreQ1, allowing a nucleophilic attack on the C1' of the ribose to form the product. After dissociation, two additional enzymatic reactions on the tRNA convert PreQ1 to queuine (Q), resulting in the hypermodified nucleoside queuosine (7-(((4,5-cis-dihydroxy-2-cyclopenten-1-yl)amino)methyl)-7-deazaguanosine). This chain is Queuine tRNA-ribosyltransferase, found in Desulforudis audaxviator (strain MP104C).